Here is a 291-residue protein sequence, read N- to C-terminus: MSDETLVNDPVNPEPARPASAAMAPPIVASPAKRIQAFTGDPDFMTSLARGLAVIQAFQERKRHLTIAQISHRTEIPRAAVRRCLHTLIKLGYATSDGRTYSLLPKVLTLGHAYLSSTPLAISAQPYLDRISDQLHEAANMATLEGDDILYIARSATVERLISVDLSVGGRLPAYCTSMGRILLAAMDDTSLREYLGRADLKARTSRTLHDPESLFACIQQVRAQGWCVVDQELEQGLRSIAVPIYDASGQVLAALNVSTHVGRVTRSELEQRFLPILLAASRDLCHQLFG.

Residues 1 to 22 are disordered; sequence MSDETLVNDPVNPEPARPASAA. In terms of domain architecture, HTH iclR-type spans 45–105; sequence MTSLARGLAV…SDGRTYSLLP (61 aa). Positions 67 to 86 form a DNA-binding region, H-T-H motif; the sequence is IAQISHRTEIPRAAVRRCLH. Residues 120 to 291 enclose the IclR-ED domain; that stretch reads LAISAQPYLD…SRDLCHQLFG (172 aa).

Its function is as follows. Positive regulator of all genes within the pca regulon, pcaBDC, pcaIJ and pcaF. Also required for the chemotactic response to aromatic compounds. The polypeptide is Pca regulon regulatory protein (pcaR) (Pseudomonas putida (Arthrobacter siderocapsulatus)).